Here is a 178-residue protein sequence, read N- to C-terminus: ATP synthase subunit delta (178 aa).

It belongs to the ATPase delta chain family. In terms of assembly, F-type ATPases have 2 components, F(1) - the catalytic core - and F(0) - the membrane proton channel. F(1) has five subunits: alpha(3), beta(3), gamma(1), delta(1), epsilon(1). F(0) has three main subunits: a(1), b(2) and c(10-14). The alpha and beta chains form an alternating ring which encloses part of the gamma chain. F(1) is attached to F(0) by a central stalk formed by the gamma and epsilon chains, while a peripheral stalk is formed by the delta and b chains.

Its subcellular location is the cell inner membrane. Functionally, f(1)F(0) ATP synthase produces ATP from ADP in the presence of a proton or sodium gradient. F-type ATPases consist of two structural domains, F(1) containing the extramembraneous catalytic core and F(0) containing the membrane proton channel, linked together by a central stalk and a peripheral stalk. During catalysis, ATP synthesis in the catalytic domain of F(1) is coupled via a rotary mechanism of the central stalk subunits to proton translocation. This protein is part of the stalk that links CF(0) to CF(1). It either transmits conformational changes from CF(0) to CF(1) or is implicated in proton conduction. The sequence is that of ATP synthase subunit delta from Pseudomonas entomophila (strain L48).